We begin with the raw amino-acid sequence, 125 residues long: Prefoldin subunit beta (125 aa).

The protein belongs to the prefoldin subunit beta family. As to quaternary structure, heterohexamer of two alpha and four beta subunits.

The protein localises to the cytoplasm. Its function is as follows. Molecular chaperone capable of stabilizing a range of proteins. Seems to fulfill an ATP-independent, HSP70-like function in archaeal de novo protein folding. This Sulfurisphaera tokodaii (strain DSM 16993 / JCM 10545 / NBRC 100140 / 7) (Sulfolobus tokodaii) protein is Prefoldin subunit beta (pfdB).